The chain runs to 381 residues: Creatine kinase M-type (381 aa).

Residues 11–98 form the Phosphagen kinase N-terminal domain; sequence KLNYSAAEEF…FDPVIEDRHG (88 aa). The Phosphagen kinase C-terminal domain maps to 125–367; sequence YVLSSRVRTG…KLMVEMEKRL (243 aa). Residues 128–132, His191, Arg236, Arg292, 320–325, and Asp335 each bind ATP; these read SSRVR and RGTGGV.

The protein belongs to the ATP:guanido phosphotransferase family. In terms of assembly, dimer of identical or non-identical chains. With MM being the major form in skeletal muscle and myocardium, MB existing in myocardium, and BB existing in many tissues, especially brain.

The protein localises to the cytoplasm. The enzyme catalyses creatine + ATP = N-phosphocreatine + ADP + H(+). In terms of biological role, reversibly catalyzes the transfer of phosphate between ATP and various phosphogens (e.g. creatine phosphate). Creatine kinase isoenzymes play a central role in energy transduction in tissues with large, fluctuating energy demands, such as skeletal muscle, heart, brain and spermatozoa. The sequence is that of Creatine kinase M-type from Torpedo marmorata (Marbled electric ray).